A 916-amino-acid chain; its full sequence is Protein O-GlcNAcase (916 aa).

A disordered region spans residues 1 to 50 (MVQKESQAALEERESERNANPASVSGASLEPSAAPAPGEDNPSGAGAAAG). The region spanning 60-336 (FLCGVVEGFY…TLATWYKSNM (277 aa)) is the GH84 domain. A protein is bound by residues G67, K98, and D174. The Proton donor role is filled by D175. Residues Y219, 278–280 (WDN), D285, and N313 contribute to the a protein site. S364 carries the phosphoserine modification. A disordered region spans residues 440-480 (QGAALSGEPSALTKEEEKKQPDEEPMDMVVEKQEESEHKSD). Basic and acidic residues-rich tracts occupy residues 452–461 (TKEEEKKQPD) and 468–480 (VVEKQEESEHKSD).

Belongs to the glycosyl hydrolase 84 family. In terms of assembly, monomer. Interacts with CLOCK. Proteolytically cleaved by caspase-3 during apoptosis. The fragments interact with each other; cleavage does not decrease enzyme activity. In terms of tissue distribution, detected in spleen (at protein level). Ubiquitous. Expressed at highest levels in the brain and spleen.

It localises to the nucleus. The protein resides in the cytoplasm. The catalysed reaction is 3-O-(N-acetyl-beta-D-glucosaminyl)-L-seryl-[protein] + H2O = N-acetyl-D-glucosamine + L-seryl-[protein]. The enzyme catalyses 3-O-(N-acetyl-beta-D-glucosaminyl)-L-threonyl-[protein] + H2O = L-threonyl-[protein] + N-acetyl-D-glucosamine. With respect to regulation, inhibited by Cu(2+), Hg(2+), Cd(2+) and Zn(2+) at 1 mM. Not inhibited by Co(2+), Mg(2+), Ca(2+), Mn(2+), Fe(3+) and EDTA. Also inhibited by sodium chloride at 1M and 2-amino-2-hydroxymethyl-1,3-propanediol (trishydroxymethylaminomethane) at 75 mM. In terms of biological role, cleaves GlcNAc but not GalNAc from O-glycosylated proteins. Deglycosylates a large and diverse number of proteins, such as CRYAB, ELK1, GSDMD, LMNB1 and TAB1. Can use p-nitrophenyl-beta-GlcNAc and 4-methylumbelliferone-GlcNAc as substrates but not p-nitrophenyl-beta-GalNAc or p-nitrophenyl-alpha-GlcNAc (in vitro). Does not bind acetyl-CoA and does not have histone acetyltransferase activity. Its function is as follows. Lacks enzyme activity. The sequence is that of Protein O-GlcNAcase from Rattus norvegicus (Rat).